The following is a 555-amino-acid chain: MSEAEARPSNFIRQIIDEDLASGKHTSVHTRFPPEPNGYLHIGHAKSICLNFGIAEDYQGQCNLRFDDTNPVKEDVEFVESIKRDVEWLGFTWSGDVRYSSDYFDQLYQYAVELINKGLAYVDELTPEQMREYRGTLTAPGKNSPYRDRSVEENLVLFEKMRAGGFAEGTACLRAKIDMASPFIVMRDPVLYRIKFAEHHQSGNKWCIYPMYDFTHCISDALEGITHSLCTLEFQDNRRLYDWVLDNISIDCHPRQYEFSRLNLEYTIMSKRKLNQLVTEKVVEGWDDPRMPTISGLRRRGYTAASIREFCRRIGVTKQDNNVEMMSLESCIRDDLNEHAPRAMAVLDPIKVVIENRAAGEEWLTMPNHPNNPEMGSRQVPFDSEIYIDRADFREEANKQYKRLVLGKEVRLRNAYVIKAERVEKDAEGNVTTLYCSYDAETLNKDPADGRKVKGVIHWVSVAHALPAEIRLYDRLFNVPNPAAAEDFLSTINPESLVIRQGFVEPSLADAVSDKTYQFEREGYFCADSRYSRPGALVFNRTVGLRDTWAAKATQ.

Residues 34 to 44 carry the 'HIGH' region motif; that stretch reads PEPNGYLHIGH. Residues 35 to 37 and 41 to 47 contribute to the ATP site; these read EPN and HIGHAKS. The L-glutamine site is built by D67 and Y212. ATP is bound by residues T231, 261–262, and 269–271; these read RL and MSK. The 'KMSKS' region signature appears at 268–272; the sequence is IMSKR.

Belongs to the class-I aminoacyl-tRNA synthetase family. As to quaternary structure, monomer.

It localises to the cytoplasm. The enzyme catalyses tRNA(Gln) + L-glutamine + ATP = L-glutaminyl-tRNA(Gln) + AMP + diphosphate. This chain is Glutamine--tRNA ligase, found in Yersinia pseudotuberculosis serotype O:3 (strain YPIII).